The sequence spans 500 residues: MYSLQLFATEIPAMKITISKISPDFKTIVMGLFEDNETVNDGGVLQGKQVIDNIKQFSDFNGSFGEFFSTALPEEKNVIVVGLGKKDEWNENKELNIGGKIYCELSRLKIKKAAVLIEGSAANVAYGAFLRSFKFDKYKTKKDEKITEVEEITVLVKDEQLSNAERSFEHLRQEGESIFLARSFITEPPNILYPESYADHIKKELTKLGLEIEVLDKKQMEEKKMGALLGVAQGSSKEPKLVVIKWNGASKEQKPIAFVGKGITFDTGGVSLKPSRGMESMKYDMAGSATVVGVMHALAGRKAKVNAIGVVALAENAVGGNAQRPSDVVTSMSGQTIEVLNTDAEGRLILADALWYTQDRFSPKFMIDLATLTGAIVVALGNNEYAGLFSNNDELANRLIDAGNEVNEKLWRFPMNETYDKIIDSPIADVQNIAPAGSGGDSIMAAQFLQRFVNETCWAHLDIAGTAWHEKGTDICPRGAVGFGVRLLNKLVEKYYEAND.

Residues Lys-261 and Asp-266 each coordinate Mn(2+). Lys-273 is a catalytic residue. 3 residues coordinate Mn(2+): Asp-284, Asp-343, and Glu-345. Arg-347 is an active-site residue.

The protein belongs to the peptidase M17 family. Mn(2+) serves as cofactor.

It localises to the cytoplasm. The enzyme catalyses Release of an N-terminal amino acid, Xaa-|-Yaa-, in which Xaa is preferably Leu, but may be other amino acids including Pro although not Arg or Lys, and Yaa may be Pro. Amino acid amides and methyl esters are also readily hydrolyzed, but rates on arylamides are exceedingly low.. It catalyses the reaction Release of an N-terminal amino acid, preferentially leucine, but not glutamic or aspartic acids.. Presumably involved in the processing and regular turnover of intracellular proteins. Catalyzes the removal of unsubstituted N-terminal amino acids from various peptides. The sequence is that of Probable cytosol aminopeptidase from Wolbachia pipientis wMel.